The primary structure comprises 36 residues: Pancreatic polypeptide (36 aa).

Position 36 is a tyrosine amide (tyrosine 36).

The protein belongs to the NPY family.

It is found in the secreted. In terms of biological role, hormone secreted by pancreatic cells that acts as a regulator of pancreatic and gastrointestinal functions probably by signaling through the G protein-coupled receptor NPY4R2. In Erinaceus europaeus (Western European hedgehog), this protein is Pancreatic polypeptide (PPY).